The sequence spans 318 residues: MAAVITLIGATASGKTDLACALYQRFPLRLISVDSAQIYRGMDIGTAKPSAAFLKQYPHDLIDCCEPEEHYSAARFCQDAHQAIAKAHADGKIPLLVGGTMLYYHALFSGLSDLPPADAQLRAEIMAEMHTRGLPALYADLLAYDPEQANKIAANDTQRIIRFTELFRQTGQPPSALFAQQKQAAPTWNSLHLALLPERHLLHQAIAQRFQTMMAAGFLEEVARLKMRPKLTAEHSSMRSVGYRQLWRHLDGEIDLETAVELSIIATRQLAKRQITWLNNRLKTVLSMHFYDPYQAETPNRVFQQVAQFCKHNEGTFL.

An ATP-binding site is contributed by 9–16 (GATASGKT). 11-16 (TASGKT) contacts substrate. Interaction with substrate tRNA stretches follow at residues 34–37 (DSAQ) and 158–162 (QRIIR).

Belongs to the IPP transferase family. Monomer. The cofactor is Mg(2+).

The catalysed reaction is adenosine(37) in tRNA + dimethylallyl diphosphate = N(6)-dimethylallyladenosine(37) in tRNA + diphosphate. Its function is as follows. Catalyzes the transfer of a dimethylallyl group onto the adenine at position 37 in tRNAs that read codons beginning with uridine, leading to the formation of N6-(dimethylallyl)adenosine (i(6)A). In Dichelobacter nodosus (strain VCS1703A), this protein is tRNA dimethylallyltransferase.